Here is a 461-residue protein sequence, read N- to C-terminus: Bifunctional protein GlmU (461 aa).

Positions 1–230 (MSKIHAVVLA…PEETLGVNDR (230 aa)) are pyrophosphorylase. Residues 9–12 (LAAG), lysine 23, glutamine 73, 78–79 (GT), 101–103 (YGD), glycine 140, glutamate 155, asparagine 170, and asparagine 228 contribute to the UDP-N-acetyl-alpha-D-glucosamine site. Position 103 (aspartate 103) interacts with Mg(2+). Asparagine 228 serves as a coordination point for Mg(2+). Residues 231–251 (VQLSEAEAYMKKRIMTGHMRN) form a linker region. The segment at 252 to 461 (GVTIIDPTST…KMPRKGKKQS (210 aa)) is N-acetyltransferase. Positions 333 and 351 each coordinate UDP-N-acetyl-alpha-D-glucosamine. Residue histidine 363 is the Proton acceptor of the active site. The UDP-N-acetyl-alpha-D-glucosamine site is built by tyrosine 366 and asparagine 377. Residues 386–387 (NY), alanine 423, and arginine 440 contribute to the acetyl-CoA site.

This sequence in the N-terminal section; belongs to the N-acetylglucosamine-1-phosphate uridyltransferase family. The protein in the C-terminal section; belongs to the transferase hexapeptide repeat family. In terms of assembly, homotrimer. Mg(2+) is required as a cofactor.

It localises to the cytoplasm. It catalyses the reaction alpha-D-glucosamine 1-phosphate + acetyl-CoA = N-acetyl-alpha-D-glucosamine 1-phosphate + CoA + H(+). It carries out the reaction N-acetyl-alpha-D-glucosamine 1-phosphate + UTP + H(+) = UDP-N-acetyl-alpha-D-glucosamine + diphosphate. Its pathway is nucleotide-sugar biosynthesis; UDP-N-acetyl-alpha-D-glucosamine biosynthesis; N-acetyl-alpha-D-glucosamine 1-phosphate from alpha-D-glucosamine 6-phosphate (route II): step 2/2. It functions in the pathway nucleotide-sugar biosynthesis; UDP-N-acetyl-alpha-D-glucosamine biosynthesis; UDP-N-acetyl-alpha-D-glucosamine from N-acetyl-alpha-D-glucosamine 1-phosphate: step 1/1. The protein operates within bacterial outer membrane biogenesis; LPS lipid A biosynthesis. In terms of biological role, catalyzes the last two sequential reactions in the de novo biosynthetic pathway for UDP-N-acetylglucosamine (UDP-GlcNAc). The C-terminal domain catalyzes the transfer of acetyl group from acetyl coenzyme A to glucosamine-1-phosphate (GlcN-1-P) to produce N-acetylglucosamine-1-phosphate (GlcNAc-1-P), which is converted into UDP-GlcNAc by the transfer of uridine 5-monophosphate (from uridine 5-triphosphate), a reaction catalyzed by the N-terminal domain. This Brevibacillus brevis (strain 47 / JCM 6285 / NBRC 100599) protein is Bifunctional protein GlmU.